We begin with the raw amino-acid sequence, 459 residues long: Mitochondrial distribution and morphology protein 34 (459 aa).

An SMP-LTD domain is found at 1 to 190; it reads MSFRFNEAVF…LPSLIFNTSQ (190 aa). The span at 338 to 347 shows a compositional bias: basic and acidic residues; sequence RSNSNDDNAK. The interval 338–375 is disordered; sequence RSNSNDDNAKPRRRKIKCKKTRTPSNLQSQGEQAVDDS. Basic residues predominate over residues 348–359; it reads PRRRKIKCKKTR.

Belongs to the MDM34 family. As to quaternary structure, component of the ER-mitochondria encounter structure (ERMES) or MDM complex, composed of MMM1, MDM10, MDM12 and MDM34. Ubiquitinated by a SCF (SKP1-CUL1-F-box protein) E3 ubiquitin-protein ligase complex containing the F-box protein MDM30. Ubiquitination is important for mitochondrial integrity.

The protein localises to the mitochondrion outer membrane. Component of the ERMES/MDM complex, which serves as a molecular tether to connect the endoplasmic reticulum (ER) and mitochondria. Components of this complex are involved in the control of mitochondrial shape and protein biogenesis, and function in nonvesicular lipid trafficking between the ER and mitochondria. MDM34 is required for the interaction of the ER-resident membrane protein MMM1 and the outer mitochondrial membrane-resident beta-barrel protein MDM10. The chain is Mitochondrial distribution and morphology protein 34 from Saccharomyces cerevisiae (strain AWRI1631) (Baker's yeast).